The sequence spans 108 residues: DNA-directed RNA polymerase III subunit RPC10 (108 aa).

Cys5, Cys8, Cys25, Cys28, Cys69, and Cys72 together coordinate Zn(2+). The segment at 5–28 adopts a C4-type zinc-finger fold; the sequence is CPGCGNGLIVEEGQRCHRFACNTC. The TFIIS-type zinc-finger motif lies at 65–107; it reads TAESCPKCEHPRAYFMQLQTRSADEPMTTFYKCCNAQCGHRWR. A Hairpin motif is present at residues 88–89; that stretch reads DE. The Zn(2+) site is built by Cys98 and Cys102.

The protein belongs to the archaeal RpoM/eukaryotic RPA12/RPB9/RPC11 RNA polymerase family. As to quaternary structure, component of the RNA polymerase III complex consisting of 17 subunits: a ten-subunit horseshoe-shaped catalytic core composed of POLR3A/RPC1, POLR3B/RPC2, POLR1C/RPAC1, POLR1D/RPAC2, POLR3K/RPC10, POLR2E/RPABC1, POLR2F/RPABC2, POLR2H/RPABC3, POLR2K/RPABC4 and POLR2L/RPABC5; a mobile stalk composed of two subunits POLR3H/RPC8 and CRCP/RPC9, protruding from the core and functioning primarily in transcription initiation; and additional subunits homologous to general transcription factors of the RNA polymerase II machinery, POLR3C/RPC3-POLR3F/RPC6-POLR3G/RPC7 heterotrimer required for transcription initiation and POLR3D/RPC4-POLR3E/RPC5 heterodimer involved in both transcription initiation and termination.

It is found in the nucleus. Its function is as follows. Core component of RNA polymerase III (Pol III) which synthesizes small non-coding RNAs using the four ribonucleoside triphosphates as substrates. Can mediate Pol I proofreading of the nascent RNA transcript. Anchors into the Pol III active site to constantly monitor transcription fidelity, cleaves mis-incorporated 5'-ribonucleotides and restarts the transcription process. Once Pol III reaches the poly(dT) termination signal, can induce Pol III clamp opening and transcription termination. Pol III plays an important role in sensing and limiting infection by intracellular bacteria and DNA viruses. Acts as a nuclear and cytosolic DNA sensor involved in innate immune response. Can sense non-self dsDNA that serves as template for transcription into dsRNA. The non-self RNA polymerase III transcripts, such as Epstein-Barr virus-encoded RNAs (EBERs) induce type I interferon and NF-kappa-B through the RIG-I pathway. The polypeptide is DNA-directed RNA polymerase III subunit RPC10 (Homo sapiens (Human)).